Consider the following 99-residue polypeptide: Nucleoid-associated protein str1598 (99 aa).

This sequence belongs to the YbaB/EbfC family. Homodimer.

It is found in the cytoplasm. Its subcellular location is the nucleoid. Its function is as follows. Binds to DNA and alters its conformation. May be involved in regulation of gene expression, nucleoid organization and DNA protection. This chain is Nucleoid-associated protein str1598, found in Streptococcus thermophilus (strain CNRZ 1066).